Here is a 69-residue protein sequence, read N- to C-terminus: Putative membrane protein insertion efficiency factor (69 aa).

The protein belongs to the UPF0161 family.

Its subcellular location is the cell inner membrane. Its function is as follows. Could be involved in insertion of integral membrane proteins into the membrane. This chain is Putative membrane protein insertion efficiency factor, found in Syntrophotalea carbinolica (strain DSM 2380 / NBRC 103641 / GraBd1) (Pelobacter carbinolicus).